The sequence spans 131 residues: MSAKTEEILESLKSLSLLEASELVKQIEEAFGVSAAASAGVVMAAPGAAGGDGDDGAAEEKTEFDVVLESFDAAAKIKVLKVVRNATGLGLGDAKTLVESAPKTVKEGIAKADAESLKKEIEEAGGKVTLK.

The protein belongs to the bacterial ribosomal protein bL12 family. In terms of assembly, homodimer. Part of the ribosomal stalk of the 50S ribosomal subunit. Forms a multimeric L10(L12)X complex, where L10 forms an elongated spine to which 2 to 4 L12 dimers bind in a sequential fashion. Binds GTP-bound translation factors.

Forms part of the ribosomal stalk which helps the ribosome interact with GTP-bound translation factors. Is thus essential for accurate translation. The chain is Large ribosomal subunit protein bL12 from Prochlorococcus marinus (strain MIT 9215).